The following is a 108-amino-acid chain: uncharacterized protein (108 aa).

The next 3 membrane-spanning stretches (helical) occupy residues 10–32, 45–67, and 77–99; these read SLCY…FVVN, ISHI…GAVA, and FVII…WNVI.

It localises to the cell membrane. This is an uncharacterized protein from Bacillus subtilis (strain 168).